We begin with the raw amino-acid sequence, 450 residues long: UDP-N-acetylmuramoylalanine--D-glutamate ligase (450 aa).

Residue 119–125 (GSNGKTT) coordinates ATP.

The protein belongs to the MurCDEF family.

It is found in the cytoplasm. It carries out the reaction UDP-N-acetyl-alpha-D-muramoyl-L-alanine + D-glutamate + ATP = UDP-N-acetyl-alpha-D-muramoyl-L-alanyl-D-glutamate + ADP + phosphate + H(+). Its pathway is cell wall biogenesis; peptidoglycan biosynthesis. Functionally, cell wall formation. Catalyzes the addition of glutamate to the nucleotide precursor UDP-N-acetylmuramoyl-L-alanine (UMA). The chain is UDP-N-acetylmuramoylalanine--D-glutamate ligase from Streptococcus pneumoniae (strain Taiwan19F-14).